Here is a 172-residue protein sequence, read N- to C-terminus: MKRCACLSNSPTRHTTVVVPSPVISSCAAAALAISTAVGDWICISVSNTLPSLVSLMLPAPSTSIFSVPLGPKLVSRTDCKPSADVTLTFKAASLLNDSAFGFNNCNDMLLLYLYYNLLLLTASTPLTFTFSTHCTHTLLYIILSVFRSFLTRITTTNTSPSENFATKAKLP.

A helical transmembrane segment spans residues 109 to 129; it reads MLLLYLYYNLLLLTASTPLTF.

It is found in the membrane. This is an uncharacterized protein from Saccharomyces cerevisiae (strain ATCC 204508 / S288c) (Baker's yeast).